The chain runs to 176 residues: Endoribonuclease YbeY (176 aa).

Zn(2+)-binding residues include His-128, His-132, and His-138.

Belongs to the endoribonuclease YbeY family. Zn(2+) is required as a cofactor.

The protein localises to the cytoplasm. Single strand-specific metallo-endoribonuclease involved in late-stage 70S ribosome quality control and in maturation of the 3' terminus of the 16S rRNA. This Zymomonas mobilis subsp. mobilis (strain ATCC 31821 / ZM4 / CP4) protein is Endoribonuclease YbeY.